Here is a 571-residue protein sequence, read N- to C-terminus: MDHTSPTYMLANLTHLHSEQLLQGLNLLRQHHELCDIILRVGDVKIHAHKVVLASVSPYFKAMFTGNLSEKENSEVEFQCIDETALQAIVEYAYTGTVFISQDTVESLLPAANLLQIKLVLKECCAFLESQLDPGNCIGISRFAETYGCRDLYLAATKYICQNFEAVCQTEEFFELTHADLDEIVSNDCLNVATEETVFYALESWIKYDVQERQKYLAQLLNSVRLPLLSVKFLTRLYEANHLIRDDRTCKHLLNEALKYHFMPEHRLSHQTVLMTRPRCAPKVLCAVGGKSGLFACLDSVEMYFPQNDSWIGLAPLNIPRYEFGICVLDQKVYVIGGIATNVRPGVTIRKHENSVECWNPDTNTWTSLERMNESRSTLGVVVLAGELYALGGYDGQSYLQSVEKYIPKIRKWQPVAPMTTTRSCFAAAVLDGMIYAIGGYGPAHMNSVERYDPSKDSWEMVASMADKRIHFGVGVMLGFIFVVGGHNGVSHLSSIERYDPHQNQWTVCRPMKEPRTGVGAAVIDNYLYVVGGHSGSSYLNTVQKYDPISDTWLDSAGMIYCRCNFGLTAL.

The 68-residue stretch at 35–102 (CDIILRVGDV…AYTGTVFISQ (68 aa)) folds into the BTB domain. 6 Kelch repeats span residues 284–331 (VLCA…VLDQ), 332–386 (KVYV…VLAG), 387–433 (ELYA…VLDG), 435–479 (IYAI…VMLG), 480–526 (FIFV…VIDN), and 528–570 (LYVV…GLTA).

The chain is Kelch-like protein 28 (KLHL28) from Homo sapiens (Human).